The primary structure comprises 487 residues: GTPase Der (487 aa).

EngA-type G domains lie at 3–167 (FTLA…EGFA) and 203–378 (LQIA…DIWN). GTP contacts are provided by residues 9–16 (GRPNVGKS), 56–60 (DTAGL), 119–122 (NKAE), 209–216 (GRPNAGKS), 256–260 (DTAGM), and 321–324 (NKWD). Residues 379-463 (RRITTARLNS…PIRLTMRGQG (85 aa)) form the KH-like domain. The disordered stretch occupies residues 459 to 487 (MRGQGDKNPFKERKFRTPSRLRKHLGKKG). Over residues 471-487 (RKFRTPSRLRKHLGKKG) the composition is skewed to basic residues.

The protein belongs to the TRAFAC class TrmE-Era-EngA-EngB-Septin-like GTPase superfamily. EngA (Der) GTPase family. Associates with the 50S ribosomal subunit.

Functionally, GTPase that plays an essential role in the late steps of ribosome biogenesis. In Cereibacter sphaeroides (strain ATCC 17025 / ATH 2.4.3) (Rhodobacter sphaeroides), this protein is GTPase Der.